A 311-amino-acid polypeptide reads, in one-letter code: Burkholderia TALE-like protein 3 (311 aa).

A Cryptic repeat -1 repeat occupies 19–50; it reads LSPFECLKIEKHSGGADALEFISNKYDALTQV. One copy of the Cryptic repeat 0 repeat lies at 51–83; it reads LSRADILKIACHDCAAHALQAVLDYEQVFRQRG. Core repeat repeat units lie at residues 84–116, 117–149, 150–182, 183–215, 216–248, and 249–281; these read FARA…NECG, FSQA…NERD, YSGA…CESG, YSGA…CERG, YCRT…CERG, and YSRT…TQAG. Residues 282–311 form a Cryptic repeat +1 repeat; that stretch reads RSNEDIVNMAARTGAAGQIRKMAAQLSGRQ.

This sequence belongs to the transcription activator-like effector (TALE) family. Bat subfamily.

Its function is as follows. Does not bind DNA, probably because it has too few core repeats. This chain is Burkholderia TALE-like protein 3, found in Mycetohabitans rhizoxinica (strain DSM 19002 / CIP 109453 / HKI 454) (Paraburkholderia rhizoxinica).